The sequence spans 73 residues: Translation initiation factor IF-1 (73 aa).

In terms of domain architecture, S1-like spans 1 to 73 (MAKKEDTIVL…TKARVVYRHR (73 aa)).

Belongs to the IF-1 family. In terms of assembly, component of the 30S ribosomal translation pre-initiation complex which assembles on the 30S ribosome in the order IF-2 and IF-3, IF-1 and N-formylmethionyl-tRNA(fMet); mRNA recruitment can occur at any time during PIC assembly.

The protein resides in the cytoplasm. In terms of biological role, one of the essential components for the initiation of protein synthesis. Stabilizes the binding of IF-2 and IF-3 on the 30S subunit to which N-formylmethionyl-tRNA(fMet) subsequently binds. Helps modulate mRNA selection, yielding the 30S pre-initiation complex (PIC). Upon addition of the 50S ribosomal subunit IF-1, IF-2 and IF-3 are released leaving the mature 70S translation initiation complex. This chain is Translation initiation factor IF-1, found in Chlamydia caviae (strain ATCC VR-813 / DSM 19441 / 03DC25 / GPIC) (Chlamydophila caviae).